The chain runs to 1262 residues: Collagen alpha-1(III) chain (1262 aa).

A signal peptide spans 1–23 (MMSFVQKVSLFILAVFQPSVILA). The propeptide at 24–150 (QQDALGGCTH…PSISGGSFSP (127 aa)) is N-terminal propeptide. In terms of domain architecture, VWFC spans 29–88 (GGCTHLGQEYADRDVWKPEPCQICVCDSGSVLCDDIICDDQELDCPNPEIPLGECCPVCP). Disordered regions lie at residues 95-143 (TELP…CPSI) and 160-1000 (GSVG…GGVA). Residues 102–118 (GPKGDPGSPGSPGRTGA) are compositionally biased toward low complexity. A compositionally biased stretch (pro residues) spans 119 to 134 (PGPPGQPGSPGAPGPP). Residues 145-164 (GGSFSPQYDSYDVKAGSVGM) form a nonhelical region (N-terminal) region. The interval 165 to 994 (GYPPQPISGF…PGPSGPPGPC (830 aa)) is triple-helical region. The segment covering 167-190 (PPQPISGFPGPPGPSGPPGPPGHA) has biased composition (pro residues). The segment covering 192 to 201 (PPGSNGYQGP) has biased composition (low complexity). Residues 202 to 216 (PGEPGQPGPSGPPGP) show a composition bias toward pro residues. The span at 228–240 (KDGEPGRPGRNGD) shows a compositional bias: basic and acidic residues. Residues 253–264 (PGMPGMPGMKGA) are compositionally biased toward low complexity. The residue at position 262 (K262) is a 5-hydroxylysine. Over residues 265 to 274 (RGFDGKDGAK) the composition is skewed to basic and acidic residues. 2 stretches are compositionally biased toward low complexity: residues 276–295 (DSGAPGPKGEAGQPGANGSP) and 339–376 (TAGFPGSPGFKGEAGPPGPAGASGNPGERGEPGPQGQA). K283 carries the post-translational modification 5-hydroxylysine. The span at 389–414 (GSPGGKGEMGPSGIPGGPGPPGGRGL) shows a compositional bias: gly residues. Composition is skewed to low complexity over residues 534–549 (MRGLPGIPGSPGSDGK) and 631–640 (PGPSGSPGLQ). Residues 641–650 (GLPGGPGPAG) show a composition bias toward gly residues. Residues 672 to 684 (PKGENGIPGERGP) show a composition bias toward low complexity. Gly residues predominate over residues 692 to 701 (GARGGPGPAG). Low complexity-rich tracts occupy residues 723-738 (LQGMPGERGASGSPGP), 781-790 (TGPAGAPGPA), 802-817 (QGLPGPAGFPGAPGQN), and 828-838 (PPGLRGEAGPP). The residue at position 859 (K859) is a 5-hydroxylysine. Gly residues predominate over residues 863-872 (GSPGGPGAAG). Pro residues predominate over residues 895-904 (PGVPGPPGHP). A compositionally biased stretch (low complexity) spans 927–940 (PQGAIGSPGASGAR). Residues 976–993 (AGPPGQPGLPGPSGPPGP) show a composition bias toward pro residues. The segment at 995–1003 (CGGGVASLG) is nonhelical region (C-terminal). The propeptide at 1018-1262 (DEPKENEINL…GVDVGPVCFL (245 aa)) is C-terminal propeptide. The Fibrillar collagen NC1 domain occupies 1028–1262 (GEIMSSMKSI…GVDVGPVCFL (235 aa)). 3 disulfide bridges follow: C1058–C1090, C1098–C1260, and C1168–C1213. Ca(2+) is bound by residues D1076, N1078, Q1079, C1081, and D1084. N1163 carries an N-linked (GlcNAc...) asparagine glycan.

Belongs to the fibrillar collagen family. As to quaternary structure, trimers of identical alpha 1(III) chains. The chains are linked to each other by interchain disulfide bonds. Trimers are also cross-linked via hydroxylysines. In terms of processing, prolines at the third position of the tripeptide repeating unit (G-X-Y) are hydroxylated in some or all of the chains.

It is found in the secreted. It localises to the extracellular space. The protein localises to the extracellular matrix. In terms of biological role, collagen type III occurs in most soft connective tissues along with type I collagen. The polypeptide is Collagen alpha-1(III) chain (COL3A1) (Gallus gallus (Chicken)).